The following is a 180-amino-acid chain: Large ribosomal subunit protein uL5 (180 aa).

The protein belongs to the universal ribosomal protein uL5 family. In terms of assembly, part of the 50S ribosomal subunit; part of the 5S rRNA/L5/L18/L25 subcomplex. Contacts the 5S rRNA and the P site tRNA. Forms a bridge to the 30S subunit in the 70S ribosome.

This is one of the proteins that bind and probably mediate the attachment of the 5S RNA into the large ribosomal subunit, where it forms part of the central protuberance. In the 70S ribosome it contacts protein S13 of the 30S subunit (bridge B1b), connecting the 2 subunits; this bridge is implicated in subunit movement. Contacts the P site tRNA; the 5S rRNA and some of its associated proteins might help stabilize positioning of ribosome-bound tRNAs. The polypeptide is Large ribosomal subunit protein uL5 (Chlamydia caviae (strain ATCC VR-813 / DSM 19441 / 03DC25 / GPIC) (Chlamydophila caviae)).